A 349-amino-acid polypeptide reads, in one-letter code: uncharacterized protein (349 aa).

An N-terminal signal peptide occupies residues 1–25 (MNKYIKQGAPILGILLAVMFGGREG).

Belongs to the bacterial solute-binding protein 1 family. WtpA subfamily.

This is an uncharacterized protein from Methanococcus aeolicus (strain ATCC BAA-1280 / DSM 17508 / OCM 812 / Nankai-3).